The following is a 188-amino-acid chain: Elongation factor P (188 aa).

This sequence belongs to the elongation factor P family.

It localises to the cytoplasm. It functions in the pathway protein biosynthesis; polypeptide chain elongation. Functionally, involved in peptide bond synthesis. Stimulates efficient translation and peptide-bond synthesis on native or reconstituted 70S ribosomes in vitro. Probably functions indirectly by altering the affinity of the ribosome for aminoacyl-tRNA, thus increasing their reactivity as acceptors for peptidyl transferase. This is Elongation factor P from Chlorobium limicola (strain DSM 245 / NBRC 103803 / 6330).